The chain runs to 313 residues: Probable cell division protein WhiA (313 aa).

A DNA-binding region (H-T-H motif) is located at residues 276-309; it reads SLKELGEMLHPKLGKSGVNHRLRKLDEIAERIRK.

It belongs to the WhiA family.

Its function is as follows. Involved in cell division and chromosome segregation. The chain is Probable cell division protein WhiA from Ruminiclostridium cellulolyticum (strain ATCC 35319 / DSM 5812 / JCM 6584 / H10) (Clostridium cellulolyticum).